Reading from the N-terminus, the 907-residue chain is Anaphase-promoting complex subunit 2 (907 aa).

2 disordered regions span residues 203–228 (NNSK…EEES) and 790–838 (NKEK…AKEK). Acidic residues-rich tracts occupy residues 214–226 (QQEE…ENEE) and 804–830 (ENDD…EEEE).

The protein belongs to the cullin family. As to quaternary structure, the APC/C is composed of at least 13 subunits that stay tightly associated throughout the cell cycle: anapc1, anapc2, anapc3, anapc4, anapc5, anapc6, anapc7, anapc8, anapc10, anapc11, cdc20, cdc26 and cdh1.

It localises to the nucleus. It functions in the pathway protein modification; protein ubiquitination. In terms of biological role, component of the anaphase promoting complex/cyclosome (APC/C), a cell cycle-regulated E3 ubiquitin-protein ligase complex that controls progression through mitosis and the G1 phase of the cell cycle. The protein is Anaphase-promoting complex subunit 2 (anapc2) of Dictyostelium discoideum (Social amoeba).